A 48-amino-acid polypeptide reads, in one-letter code: uncharacterized protein (48 aa).

The protein belongs to the ELIP/psbS family.

Its subcellular location is the plastid. The protein resides in the chloroplast. Possible role in chlorophyll and/or carotenoid binding. This is an uncharacterized protein from Pyropia yezoensis (Susabi-nori).